We begin with the raw amino-acid sequence, 1330 residues long: ESX-3 secretion system protein EccC3 (1330 aa).

The next 2 membrane-spanning stretches (helical) occupy residues 43-63 (LPYLIGILIVGMIVALVATGM) and 65-85 (VISPQTLFFPFVLLLAATALY). FtsK domains follow at residues 456 to 662 (GEPL…SVSR), 811 to 1000 (RDPL…RDSN), and 1090 to 1280 (LAPV…ADSG). ATP contacts are provided by residues 479–486 (GMTGSGKS), 829–836 (GGPKSGKS), and 1107–1114 (GDARSGKT).

Part of the ESX-3 / type VII secretion system (T7SS), which is composed of cytosolic and membrane components. The ESX-3 membrane complex is composed of EccB3, EccC3, EccD3 and EccE3.

It localises to the cell inner membrane. Its function is as follows. Part of the ESX-3 specialized secretion system, which is important for iron and zinc uptake or homeostasis. The sequence is that of ESX-3 secretion system protein EccC3 from Mycobacterium tuberculosis (strain ATCC 25618 / H37Rv).